An 806-amino-acid polypeptide reads, in one-letter code: MDFINIEKKWQEFWWKNKSFEPKDDFNLPKKYILSMLPYPSGEIHMGHVRNYTIGDALARYYRLHHYNVLHPMGFDSFGMPAENAAIKHGIHPKTWTYENIEAMQKEFEALGFSFSKNREFATSDPDYTKFEQQFFIDLWEKGLIYRKKAMLNWCPNDKTVLANEQVIDGRCWRCDTEVVQKELYQYYLKITNYAEELLKDLETLEDHWPSQVLIMQKNWIGKSSGLQFGFKIADECLKACNGIQEIEVFTTRADTIYGVTYIAIAPEHPLVEHAIKRVSQEDSKIIKAILNTTQRERALEKKGAFLGIYAIHPLTKQKIPVWVANFALANYGSGALMGVPACDERDFEFANLYHIPIKVITQSLQNLPHTKEEVLKNSGEWSDLSSSVAREQIIAYFEKENLGKRVINYRLQDWGVSRQRYWGAPIPMIHCKHCGIVPETQLPVTLPEDIVIDGEGNPLEKHASWKFAQCPKCHKDALRETDTMDTFIQSSWYFLRYTTPKNQRENQAFDQNYLKYFMPVDTYIGGIEHAILHLLYARFFTKALRDLGYLHLDEPFKQLITQGMVLKDGAKMSKSKGNVVSPKEILKKYGADAARLFILFAAPPAKELEWNDSALEGAHRFIKRLYDKANAITPTTSKPEFKGVILNEAQKLARKKVYEALKKSHEIFNKTESTYAFNTLIASCMEALNALSAQNNERILCEGYFVLLQILEPIIPHTAWELSERLFKRENFKPIAIDESALMEDFMTLGLTINGKRRAELKVNINASKEEIIVLAKKELEKYLEKASVKKEIYVPNKLVNFVIA.

Residues 38-48 (PYPSGEIHMGH) carry the 'HIGH' region motif. A 'KMSKS' region motif is present at residues 572 to 576 (KMSKS). Residue K575 participates in ATP binding.

The protein belongs to the class-I aminoacyl-tRNA synthetase family.

The protein resides in the cytoplasm. It catalyses the reaction tRNA(Leu) + L-leucine + ATP = L-leucyl-tRNA(Leu) + AMP + diphosphate. This Helicobacter pylori (strain HPAG1) protein is Leucine--tRNA ligase.